A 467-amino-acid polypeptide reads, in one-letter code: ATP synthase subunit beta (467 aa).

156–163 contacts ATP; the sequence is GGAGVGKT.

It belongs to the ATPase alpha/beta chains family. As to quaternary structure, F-type ATPases have 2 components, CF(1) - the catalytic core - and CF(0) - the membrane proton channel. CF(1) has five subunits: alpha(3), beta(3), gamma(1), delta(1), epsilon(1). CF(0) has three main subunits: a(1), b(2) and c(9-12). The alpha and beta chains form an alternating ring which encloses part of the gamma chain. CF(1) is attached to CF(0) by a central stalk formed by the gamma and epsilon chains, while a peripheral stalk is formed by the delta and b chains.

It is found in the cell inner membrane. It catalyses the reaction ATP + H2O + 4 H(+)(in) = ADP + phosphate + 5 H(+)(out). Functionally, produces ATP from ADP in the presence of a proton gradient across the membrane. The catalytic sites are hosted primarily by the beta subunits. The chain is ATP synthase subunit beta from Cupriavidus taiwanensis (strain DSM 17343 / BCRC 17206 / CCUG 44338 / CIP 107171 / LMG 19424 / R1) (Ralstonia taiwanensis (strain LMG 19424)).